The primary structure comprises 188 residues: Probable manganese efflux pump MntP (188 aa).

5 consecutive transmembrane segments (helical) span residues 3 to 23, 66 to 86, 106 to 128, 143 to 163, and 168 to 188; these read ITATVLLAFGMSMDAFAASIG, LEWNHWIAFVLLIFLGGRMII, WLLVTTAIATSLDAMAVGVGLAF, ATLIMSTLGMMVGRFIGPILG, and ILGGLVLIGIGVQILWTHFHG.

Belongs to the MntP (TC 9.B.29) family.

The protein resides in the cell inner membrane. Probably functions as a manganese efflux pump. The polypeptide is Probable manganese efflux pump MntP (Escherichia fergusonii (strain ATCC 35469 / DSM 13698 / CCUG 18766 / IAM 14443 / JCM 21226 / LMG 7866 / NBRC 102419 / NCTC 12128 / CDC 0568-73)).